Reading from the N-terminus, the 288-residue chain is AA9 family lytic polysaccharide monooxygenase A (288 aa).

Residues 1-22 (MKSTSATKFSVLAAATFAAAHG) form the signal peptide. Cu(2+) contacts are provided by His-21 and His-104. Cystine bridges form between Cys-74-Cys-191 and Cys-115-Cys-119. Asn-151 is a glycosylation site (N-linked (GlcNAc...) asparagine). O2 contacts are provided by His-177 and Gln-186. Residue Tyr-188 coordinates Cu(2+). Residues 236–270 (PEPYKSGSGSSDNAAEAVSSAAAEEPAAAATSAAA) form a disordered region. The span at 249–270 (AAEAVSSAAAEEPAAAATSAAA) shows a compositional bias: low complexity.

This sequence belongs to the polysaccharide monooxygenase AA9 family. The cofactor is Cu(2+).

The protein resides in the secreted. The enzyme catalyses [(1-&gt;4)-beta-D-glucosyl]n+m + reduced acceptor + O2 = 4-dehydro-beta-D-glucosyl-[(1-&gt;4)-beta-D-glucosyl]n-1 + [(1-&gt;4)-beta-D-glucosyl]m + acceptor + H2O.. Functionally, lytic polysaccharide monooxygenase (LPMO) that depolymerizes crystalline and amorphous polysaccharides via the oxidation of scissile alpha- or beta-(1-4)-glycosidic bonds, yielding C1 and C4 oxidation products. Catalysis by LPMOs requires the reduction of the active-site copper from Cu(II) to Cu(I) by a reducing agent and H(2)O(2) or O(2) as a cosubstrate. Active on cellulose and on xyloglucan for deconstruction of plant biomass. This chain is AA9 family lytic polysaccharide monooxygenase A, found in Geotrichum candidum (Oospora lactis).